The chain runs to 505 residues: 2-methylcitrate dehydratase (505 aa).

The protein belongs to the PrpD family. As to quaternary structure, monomer.

It catalyses the reaction (2S,3S)-2-methylcitrate = 2-methyl-cis-aconitate + H2O. It carries out the reaction citrate = D-threo-isocitrate. Its pathway is organic acid metabolism; propanoate degradation. It participates in carbohydrate metabolism; tricarboxylic acid cycle; isocitrate from oxaloacetate: step 1/2. Functionally, involved in the catabolism of short chain fatty acids (SCFA) via the tricarboxylic acid (TCA)(acetyl degradation route) and via the 2-methylcitrate cycle I (propionate degradation route). Catalyzes the dehydration of 2-methylcitrate (2-MC) to yield the cis isomer of 2-methyl-aconitate. Could also catalyze the dehydration of citrate and the hydration of cis-aconitate. The protein is 2-methylcitrate dehydratase of Mycobacterium tuberculosis (strain ATCC 35801 / TMC 107 / Erdman).